Consider the following 95-residue polypeptide: Protein TusB (95 aa).

This sequence belongs to the DsrH/TusB family. As to quaternary structure, heterohexamer, formed by a dimer of trimers. The hexameric TusBCD complex contains 2 copies each of TusB, TusC and TusD. The TusBCD complex interacts with TusE.

Its subcellular location is the cytoplasm. Part of a sulfur-relay system required for 2-thiolation of 5-methylaminomethyl-2-thiouridine (mnm(5)s(2)U) at tRNA wobble positions. This chain is Protein TusB, found in Buchnera aphidicola subsp. Schizaphis graminum (strain Sg).